Here is a 460-residue protein sequence, read N- to C-terminus: Argininosuccinate lyase (460 aa).

The protein belongs to the lyase 1 family. Argininosuccinate lyase subfamily.

It localises to the cytoplasm. The enzyme catalyses 2-(N(omega)-L-arginino)succinate = fumarate + L-arginine. Its pathway is amino-acid biosynthesis; L-arginine biosynthesis; L-arginine from L-ornithine and carbamoyl phosphate: step 3/3. In Lawsonia intracellularis (strain PHE/MN1-00), this protein is Argininosuccinate lyase.